A 188-amino-acid polypeptide reads, in one-letter code: Elongation factor P (188 aa).

An N6-(3,6-diaminohexanoyl)-5-hydroxylysine modification is found at Lys34.

It belongs to the elongation factor P family. Post-translationally, may be beta-lysylated on the epsilon-amino group of Lys-34 by the combined action of EpmA and EpmB, and then hydroxylated on the C5 position of the same residue by EpmC (if this protein is present). Lysylation is critical for the stimulatory effect of EF-P on peptide-bond formation. The lysylation moiety may extend toward the peptidyltransferase center and stabilize the terminal 3-CCA end of the tRNA. Hydroxylation of the C5 position on Lys-34 may allow additional potential stabilizing hydrogen-bond interactions with the P-tRNA.

The protein localises to the cytoplasm. It functions in the pathway protein biosynthesis; polypeptide chain elongation. In terms of biological role, involved in peptide bond synthesis. Alleviates ribosome stalling that occurs when 3 or more consecutive Pro residues or the sequence PPG is present in a protein, possibly by augmenting the peptidyl transferase activity of the ribosome. Modification of Lys-34 is required for alleviation. This chain is Elongation factor P, found in Vibrio parahaemolyticus serotype O3:K6 (strain RIMD 2210633).